A 39-amino-acid chain; its full sequence is Photosystem II reaction center protein Psb30 (39 aa).

A helical transmembrane segment spans residues 12 to 32 (IFQLTFVGLIMVAGPVVIFLL).

It belongs to the Psb30/Ycf12 family. In terms of assembly, PSII is composed of 1 copy each of membrane proteins PsbA, PsbB, PsbC, PsbD, PsbE, PsbF, PsbH, PsbI, PsbJ, PsbK, PsbL, PsbM, PsbT, PsbX, PsbY, PsbZ, Psb30/Ycf12, peripheral proteins PsbO, CyanoQ (PsbQ), PsbU, PsbV and a large number of cofactors. It forms dimeric complexes.

The protein localises to the cellular thylakoid membrane. In terms of biological role, a core subunit of photosystem II (PSII), probably helps stabilize the reaction center. The polypeptide is Photosystem II reaction center protein Psb30 (Rippkaea orientalis (strain PCC 8801 / RF-1) (Cyanothece sp. (strain PCC 8801))).